Reading from the N-terminus, the 456-residue chain is Acyl-CoA transferase FPSE_08120 (456 aa).

The transit peptide at 1–33 (MARLLFSGQRLRPSFLRSYIRANPSSTPSATRA) directs the protein to the mitochondrion.

This sequence belongs to the CoA-transferase III family.

It is found in the mitochondrion. Functionally, acyl-CoA transferase; part of the Fusarium detoxification of benzoxazolinone cluster involved in the degradation of benzoxazolinones produced by the host plant. Maize, wheat, and rye produce the 2 benzoxazinone phytoanticipins 2,4-dihy-droxy-7-methoxy-1,4-benzoxazin-3-one (DIMBOA) and 2,4-dihydroxy-1,4-benzoxazin-3-one (DIBOA) that, due to their inherent instability once released, spontaneously degrade to the more stable corresponding benzoxazolinones, 6-methoxy-2-benzoxazolinone (MBOA) and 2-benzoxazolinone (BOA), respectively. The first step in the detoxification of benzoxazolinones involves the hydrolysis of the cyclic ester bond of benzoxazolinones by the gamma-lactamase FDB1 to aminophenols. FDB1 is able to convert 2-benzoxazolinone (BOA) into 2-aminophenol (2-AP), as well as 6-methoxy-2-benzoxazolinone (MBOA) into 5-methoxy-2-aminophenol (2-AMP). The N-malonyltransferase FDB2 then metabolizes aminophenols via N-malonylation to non-toxic malonamic acids. FDB2 converts 2-AP into N-(2-hydroxyphenyl) malonamic acid (HPMA) and 2-AMP into N-(2-hydroxy-4-methoxyphenyl) malonamic acid (HMPMA). The cluster also contains 2 transcription factors (FDB3 and FPSE_08121), an aldo-keto reductase (FPSE_08125) that possibly associates with a ketone component of BOA and MBOA degradation, an esterase (FPSE_08126), an acyl-CoA transferase (FPSE_08120), a solute carrier protein (FPSE_08119) and a transmembrane transporter (FPSE_08127) proposed to shuttle metabolites of benzoxazolinone degradation. The polypeptide is Acyl-CoA transferase FPSE_08120 (Fusarium pseudograminearum (strain CS3096) (Wheat and barley crown-rot fungus)).